An 85-amino-acid polypeptide reads, in one-letter code: Ice-structuring protein 4 (85 aa).

The signal sequence occupies residues 1–21 (MRITEANPDPDAKAVPAAAAP).

It belongs to the type-I AFP family.

It localises to the secreted. In terms of biological role, contributes to protect fish blood from freezing at subzero sea water temperatures. Lowers the blood freezing point. Binds to nascent ice crystals and prevents further growth. This Pseudopleuronectes americanus (Winter flounder) protein is Ice-structuring protein 4.